Here is a 476-residue protein sequence, read N- to C-terminus: Aspartyl/glutamyl-tRNA(Asn/Gln) amidotransferase subunit B (476 aa).

It belongs to the GatB/GatE family. GatB subfamily. In terms of assembly, heterotrimer of A, B and C subunits.

It catalyses the reaction L-glutamyl-tRNA(Gln) + L-glutamine + ATP + H2O = L-glutaminyl-tRNA(Gln) + L-glutamate + ADP + phosphate + H(+). The enzyme catalyses L-aspartyl-tRNA(Asn) + L-glutamine + ATP + H2O = L-asparaginyl-tRNA(Asn) + L-glutamate + ADP + phosphate + 2 H(+). In terms of biological role, allows the formation of correctly charged Asn-tRNA(Asn) or Gln-tRNA(Gln) through the transamidation of misacylated Asp-tRNA(Asn) or Glu-tRNA(Gln) in organisms which lack either or both of asparaginyl-tRNA or glutaminyl-tRNA synthetases. The reaction takes place in the presence of glutamine and ATP through an activated phospho-Asp-tRNA(Asn) or phospho-Glu-tRNA(Gln). This is Aspartyl/glutamyl-tRNA(Asn/Gln) amidotransferase subunit B from Listeria innocua serovar 6a (strain ATCC BAA-680 / CLIP 11262).